The sequence spans 717 residues: MGETKVIYHLDEQETPYLVKLPVPAEKVTLGDFKNILNKPNYKFFFKSMDDDFGVVKEEISDDNAKLPCFNGRVVCWLVSADGSQSDAGSVCADIQSDLPPPIERTGGIGDSRPPSFHPNTRGSQENLDNETETDSVVSARRERPGRKETSEHATRINGTSKMERRRDTGGYESSSTLMSSELDSTSFFDSDEDDSTSRFSNSTEQSSASRLMRRHKRRRRKPKAPQIERSSSFSSITDSTMSLNIITVTLNMEKYNFLGISIVGQSNERGDGGIYIGSIMKGGAVAADGRIEPGDMLLQVNDTNFENMSNDDAVRVLRDIVHKPGPITLTVAKCWDPSPRNCFTLPRSEPIRPIDPAAWVSHTAAMTGTYPAYGMSPSMSTITSTSSSITSSIPETERFDDFQLSIHSDMVTIVKAMSSSESGLEVRDRMWLKITIPNAFIGSDVVDWLYHHVEGFTDRREARKYASNLLKAGYIRHTVNKITFSEQCYYIFGDLCGNMANLSLNDHDGSSGTSDQDTLAPLPHPGAAPWPIAFQYQYPLPHPYSPHPGFPDPAYIYGGGSAGSQHSEGSRSSGSNRSSTEKRKDRETKGGDSKSGGSGSESDHTTRSSLRRDRAASERSVPASEHSHRSHHSIAHSIRSHHTHQSFGPPGIPPLYGAPMMMMPAPVSVMGPPGAPPSRDLASVPPELTASRQSFRMAMGNPSEFFVDVIKEFWGV.

Positions methionine 1 to aspartate 82 constitute a DIX domain. The interval glycine 89–serine 235 is disordered. The span at histidine 118–asparagine 127 shows a compositional bias: polar residues. Residues alanine 140–threonine 155 show a composition bias toward basic and acidic residues. Low complexity predominate over residues glutamate 173–phenylalanine 189. Positions arginine 199–serine 210 are enriched in polar residues. Basic residues predominate over residues leucine 212–lysine 224. The region spanning threonine 248–alanine 333 is the PDZ domain. Residues serine 421–aspartate 495 enclose the DEP domain. The interval proline 552–isoleucine 653 is disordered. Over residues glycine 564 to serine 579 the composition is skewed to low complexity. Composition is skewed to basic and acidic residues over residues serine 580–aspartate 593 and glutamate 602–serine 618. The span at histidine 629 to histidine 645 shows a compositional bias: basic residues.

It belongs to the DSH family. In terms of tissue distribution, expressed throughout the epidermis.

It localises to the cytoplasm. Functionally, involved in the signal transduction pathway mediated by multiple Wnt genes. Required during ciliogenesis for the docking of basal bodies to the apical plasma membrane. The protein is Segment polarity protein dishevelled homolog DVL-3 of Xenopus laevis (African clawed frog).